Here is a 99-residue protein sequence, read N- to C-terminus: Large ribosomal subunit protein bL28 (99 aa).

This sequence belongs to the bacterial ribosomal protein bL28 family.

This Caulobacter vibrioides (strain ATCC 19089 / CIP 103742 / CB 15) (Caulobacter crescentus) protein is Large ribosomal subunit protein bL28.